A 187-amino-acid chain; its full sequence is UPF0232 protein MUL_0004 (187 aa).

The segment covering 1–12 has biased composition (gly residues); sequence MNGDGEQPGPGD. Disordered stretches follow at residues 1–77 and 166–187; these read MNGD…QPLG and ASPSWRKGPRHIAGRGPRDTYG. The span at 14-30 shows a compositional bias: basic and acidic residues; that stretch reads AARDELPSMDLVRRTLA. A compositionally biased stretch (low complexity) spans 31–55; sequence EARAAARARGQDPGRGFAAGPAPRR.

This sequence belongs to the UPF0232 family.

The sequence is that of UPF0232 protein MUL_0004 from Mycobacterium ulcerans (strain Agy99).